The following is a 458-amino-acid chain: Protein adenylyltransferase FICD (458 aa).

Residues 1-23 (MILMPMASVVAVAEPKWVSVWGR) are Cytoplasmic-facing. A helical; Signal-anchor for type II membrane protein transmembrane segment spans residues 24–44 (FLWMALLSMALGSLLALLLPL). Residues 45–458 (GVVEEHCLAV…GFKETLPVRP (414 aa)) lie on the Lumenal side of the membrane. At Thr80 the chain carries O-AMP-threonine; by autocatalysis. 2 TPR repeats span residues 106 to 139 (AKAA…DPGF) and 140 to 173 (VDAL…SPFH). Thr183 carries the post-translational modification O-AMP-threonine; by autocatalysis. Positions 230–235 (TVAIEG) match the Inhibitory (S/T)XXXE(G/N) motif motif. Glu234 is an ATP binding site. An N-linked (GlcNAc...) asparagine glycan is attached at Asn275. A Fido domain is found at 285–420 (VTMDDMLEIH…VRPFIRFIAK (136 aa)). Residue 316-319 (VGHH) coordinates ATP. Residue His363 is part of the active site. ATP contacts are provided by residues 367 to 374 (DGNGRTSR), 399 to 400 (YY), and Asn407.

Belongs to the fic family. As to quaternary structure, homodimer. Interacts with HD. Requires Mg(2+) as cofactor. Mn(2+) serves as cofactor. Post-translationally, auto-AMPylated in vitro.

The protein localises to the endoplasmic reticulum membrane. The catalysed reaction is L-tyrosyl-[protein] + ATP = O-(5'-adenylyl)-L-tyrosyl-[protein] + diphosphate. The enzyme catalyses 3-O-(5'-adenylyl)-L-threonyl-[protein] + H2O = L-threonyl-[protein] + AMP + H(+). It carries out the reaction L-threonyl-[protein] + ATP = 3-O-(5'-adenylyl)-L-threonyl-[protein] + diphosphate. The side chain of Glu-234 determines which of the two opposing activities (AMPylase or de-AMPylase) will take place. In response to endoplasmic reticulum stress, mediates de-AMPylase activity. Adenylyltransferase activity is inhibited by the inhibitory helix present at the N-terminus: Glu-234 binds ATP and competes with ATP-binding at Arg-374, thereby preventing adenylyltransferase activity. In unstressed cells, disengagement of Glu-234 promotes adenylyltransferase activity. Activation dissociates ATP-binding from Glu-234, allowing ordered binding of the entire ATP moiety with the alpha-phosphate in an orientation that is productive for accepting an incoming target hydroxyl side chain. Its function is as follows. Protein that can both mediate the addition of adenosine 5'-monophosphate (AMP) to specific residues of target proteins (AMPylation), and the removal of the same modification from target proteins (de-AMPylation), depending on the context. The side chain of Glu-231 determines which of the two opposing activities (AMPylase or de-AMPylase) will take place. Acts as a key regulator of the ERN1/IRE1-mediated unfolded protein response (UPR) by mediating AMPylation or de-AMPylation of HSPA5/BiP. In unstressed cells, acts as an adenylyltransferase by mediating AMPylation of HSPA5/BiP at 'Thr-518', thereby inactivating it. In response to endoplasmic reticulum stress, acts as a phosphodiesterase by mediating removal of ATP (de-AMPylation) from HSPA5/BiP at 'Thr-518', leading to restore HSPA5/BiP activity. Although it is able to AMPylate RhoA, Rac and Cdc42 Rho GTPases in vitro, Rho GTPases do not constitute physiological substrates. In Mus musculus (Mouse), this protein is Protein adenylyltransferase FICD.